Here is a 121-residue protein sequence, read N- to C-terminus: MARILIVDDSPTEMYKLTAMLEKHGHQVLKAENGGDGVALARQEKPDVVLMDIVMPGLNGFQATRQLTKDAETSAIPVIIVTTKDQETDKVWGKRQGARDYLTKPVDEETLLKTINAVLAG.

In terms of domain architecture, Response regulatory spans 3–119; the sequence is RILIVDDSPT…TLLKTINAVL (117 aa). Aspartate 52 carries the post-translational modification 4-aspartylphosphate.

May be a part of a signal-transduction system that regulates twitching motility by controlling pilus function (extension and retraction). The sequence is that of Protein PilH (pilH) from Pseudomonas aeruginosa (strain ATCC 15692 / DSM 22644 / CIP 104116 / JCM 14847 / LMG 12228 / 1C / PRS 101 / PAO1).